A 104-amino-acid polypeptide reads, in one-letter code: NADH-quinone oxidoreductase subunit K (104 aa).

Transmembrane regions (helical) follow at residues 4–24, 31–51, and 67–87; these read VPAS…LFGA, VIVL…LVAF, and LFTM…LIAL.

It belongs to the complex I subunit 4L family. In terms of assembly, NDH-1 is composed of 14 different subunits. Subunits NuoA, H, J, K, L, M, N constitute the membrane sector of the complex.

It is found in the cell membrane. It catalyses the reaction a quinone + NADH + 5 H(+)(in) = a quinol + NAD(+) + 4 H(+)(out). In terms of biological role, NDH-1 shuttles electrons from NADH, via FMN and iron-sulfur (Fe-S) centers, to quinones in the respiratory chain. The immediate electron acceptor for the enzyme in this species is believed to be a menaquinone. Couples the redox reaction to proton translocation (for every two electrons transferred, four hydrogen ions are translocated across the cytoplasmic membrane), and thus conserves the redox energy in a proton gradient. In Bacillus cereus (strain AH187), this protein is NADH-quinone oxidoreductase subunit K.